We begin with the raw amino-acid sequence, 458 residues long: UDP-N-acetylmuramoylalanine--D-glutamate ligase (458 aa).

Residue 124 to 130 coordinates ATP; that stretch reads GSDGKTT.

The protein belongs to the MurCDEF family.

It localises to the cytoplasm. The catalysed reaction is UDP-N-acetyl-alpha-D-muramoyl-L-alanine + D-glutamate + ATP = UDP-N-acetyl-alpha-D-muramoyl-L-alanyl-D-glutamate + ADP + phosphate + H(+). It functions in the pathway cell wall biogenesis; peptidoglycan biosynthesis. Functionally, cell wall formation. Catalyzes the addition of glutamate to the nucleotide precursor UDP-N-acetylmuramoyl-L-alanine (UMA). This is UDP-N-acetylmuramoylalanine--D-glutamate ligase from Clostridium botulinum (strain 657 / Type Ba4).